Consider the following 246-residue polypeptide: Auxin-responsive protein IAA11 (246 aa).

Positions 36-40 (LGLTL) match the EAR-like (transcriptional repression) motif. The PB1 domain occupies 136–235 (SMFVKVTMDG…SVRRLRIMKT (100 aa)).

It belongs to the Aux/IAA family. Homodimers and heterodimers. Interacts with TPL. As to expression, preferentially expressed in stems and flowers.

The protein resides in the nucleus. In terms of biological role, aux/IAA proteins are short-lived transcriptional factors that function as repressors of early auxin response genes at low auxin concentrations. Repression is thought to result from the interaction with auxin response factors (ARFs), proteins that bind to the auxin-responsive promoter element (AuxRE). Formation of heterodimers with ARF proteins may alter their ability to modulate early auxin response genes expression. This Arabidopsis thaliana (Mouse-ear cress) protein is Auxin-responsive protein IAA11 (IAA11).